The chain runs to 20 residues: Glutathione S-transferase 2 (20 aa).

A GST N-terminal domain is found at 1-20; that stretch reads GYKVTYFAIRGLAEPIXLLL. Tyrosine 6 contacts glutathione.

The protein belongs to the GST superfamily. Sigma family.

The catalysed reaction is RX + glutathione = an S-substituted glutathione + a halide anion + H(+). Conjugation of reduced glutathione to a wide number of exogenous and endogenous hydrophobic electrophiles. In Ascaris suum (Pig roundworm), this protein is Glutathione S-transferase 2 (GST2).